A 360-amino-acid chain; its full sequence is Threonine synthase (360 aa).

K69 is modified (N6-(pyridoxal phosphate)lysine). Pyridoxal 5'-phosphate contacts are provided by residues N95, 196–200 (GNAGN), and T326.

The protein belongs to the threonine synthase family. Homodimer. Pyridoxal 5'-phosphate serves as cofactor.

It carries out the reaction O-phospho-L-homoserine + H2O = L-threonine + phosphate. It participates in amino-acid biosynthesis; L-threonine biosynthesis; L-threonine from L-aspartate: step 5/5. Functionally, catalyzes the gamma-elimination of phosphate from L-phosphohomoserine and the beta-addition of water to produce L-threonine. In Mycobacterium leprae (strain TN), this protein is Threonine synthase (thrC).